Reading from the N-terminus, the 513-residue chain is HTH-type transcriptional regulatory protein TyrR (513 aa).

The ACT domain maps to 2–72 (RLEVFCEDRL…GVTDVRTVPW (71 aa)). In terms of domain architecture, PAS spans 78–114 (EHLALSALLEALPEPVLSVDMKSKVDMANPASCQLFG). Residues 206–428 (IVAVSPKMKH…LKNAIYRALT (223 aa)) form the Sigma-54 factor interaction domain. ATP contacts are provided by residues 234–241 (GDTGTGKD) and 290–299 (ANGGSVLLDE). Positions 482–502 (STRKLAKRLGVSHTAIANKLR) form a DNA-binding region, H-T-H motif.

Homodimer. In presence of tyrosine (or high concentrations of phenylalanine or tryptophan) and ATP, it self-associates to form an hexamer. At low tyrosine concentrations, homodimers can bind to certain recognition sequences referred to as 'strong TyrR boxes'. Homohexamers are the active repressing species, interacting with two or three tyrR boxes in the targeted regulatory DNA, including 'strong TyrR boxes' and lower-affinity sites called 'weak TyrR boxes'.

The protein localises to the cytoplasm. Binding of ATP strongly enhances the affinity of TyrR for tyrosine. Its function is as follows. Dual transcriptional regulator of the TyrR regulon, which includes a number of genes coding for proteins involved in the biosynthesis or transport of the three aromatic amino acids, phenylalanine, tyrosine and tryptophan. These three aromatic amino acids act as effectors which bind to the TyrR protein to form an active regulatory protein. Modulates the expression of at least eight unlinked transcription units, including aroF, aroG, aroLM, aroP, mtr, tyrA, tyrB and tyrP. In most cases TyrR acts as a repressor, but positive effects have been observed on the tyrP gene, which is repressed in the presence of tyrosine and activated at high phenylalanine concentrations. Is also involved in activation, but not repression, of mtr expression in association with phenylalanine or tyrosine. Acts by binding specifically to TyrR boxes in the promoter region of the target genes. This is HTH-type transcriptional regulatory protein TyrR from Escherichia coli (strain K12).